Here is a 222-residue protein sequence, read N- to C-terminus: 2-C-methyl-D-erythritol 4-phosphate cytidylyltransferase (222 aa).

It belongs to the IspD/TarI cytidylyltransferase family. IspD subfamily.

It catalyses the reaction 2-C-methyl-D-erythritol 4-phosphate + CTP + H(+) = 4-CDP-2-C-methyl-D-erythritol + diphosphate. It functions in the pathway isoprenoid biosynthesis; isopentenyl diphosphate biosynthesis via DXP pathway; isopentenyl diphosphate from 1-deoxy-D-xylulose 5-phosphate: step 2/6. In terms of biological role, catalyzes the formation of 4-diphosphocytidyl-2-C-methyl-D-erythritol from CTP and 2-C-methyl-D-erythritol 4-phosphate (MEP). This Thermotoga maritima (strain ATCC 43589 / DSM 3109 / JCM 10099 / NBRC 100826 / MSB8) protein is 2-C-methyl-D-erythritol 4-phosphate cytidylyltransferase.